Consider the following 156-residue polypeptide: uncharacterized protein (156 aa).

2 disordered regions span residues 22-64 and 81-156; these read KERV…VLKK and AARA…DENE. Residues 43–56 are compositionally biased toward acidic residues; that stretch reads PEEDGDHSDKEDEQ. Serine 50 carries the post-translational modification Phosphoserine. At lysine 108 the chain carries N6-acetyllysine. Over residues 121–134 the composition is skewed to basic and acidic residues; the sequence is TKEEDEINKQDSVK. Serine 148 carries the post-translational modification Phosphoserine.

This is an uncharacterized protein from Bos taurus (Bovine).